A 355-amino-acid polypeptide reads, in one-letter code: Anhydro-N-acetylmuramic acid kinase (355 aa).

9–16 (GTSLDGVD) lines the ATP pocket.

Belongs to the anhydro-N-acetylmuramic acid kinase family.

It carries out the reaction 1,6-anhydro-N-acetyl-beta-muramate + ATP + H2O = N-acetyl-D-muramate 6-phosphate + ADP + H(+). The protein operates within amino-sugar metabolism; 1,6-anhydro-N-acetylmuramate degradation. It participates in cell wall biogenesis; peptidoglycan recycling. Catalyzes the specific phosphorylation of 1,6-anhydro-N-acetylmuramic acid (anhMurNAc) with the simultaneous cleavage of the 1,6-anhydro ring, generating MurNAc-6-P. Is required for the utilization of anhMurNAc either imported from the medium or derived from its own cell wall murein, and thus plays a role in cell wall recycling. This Paramagnetospirillum magneticum (strain ATCC 700264 / AMB-1) (Magnetospirillum magneticum) protein is Anhydro-N-acetylmuramic acid kinase.